We begin with the raw amino-acid sequence, 358 residues long: Ion-translocating oxidoreductase complex subunit D (358 aa).

Transmembrane regions (helical) follow at residues 16–36 (VSRTMLTVVAALTPATLFGLW), 38–58 (FGWPAIFLFLTTVVSAWVFEV), 68–90 (IRPFATDGSAILSGWLVAMTLPP), 128–148 (AMLVVALPVQMTTWIAPVGLL), 206–226 (FVPGSLGETSTVLLALGGLLL), 236–256 (IPLAVLGTLVTLSAICSFLAP), and 286–306 (PVTTAGKWVYGIGIGTLVFVI).

It belongs to the NqrB/RnfD family. The complex is composed of six subunits: RnfA, RnfB, RnfC, RnfD, RnfE and RnfG. It depends on FMN as a cofactor.

The protein resides in the cellular chromatophore membrane. Functionally, part of a membrane-bound complex that couples electron transfer with translocation of ions across the membrane. Required for nitrogen fixation. Involved in electron transfer to nitrogenase. The protein is Ion-translocating oxidoreductase complex subunit D of Rhodobacter capsulatus (Rhodopseudomonas capsulata).